A 165-amino-acid chain; its full sequence is Thiol peroxidase (165 aa).

A Thioredoxin domain is found at 18–165; that stretch reads PQVGDNLAEF…DYDAALAALN (148 aa). Residue Cys60 is the Cysteine sulfenic acid (-SOH) intermediate of the active site. Cys60 and Cys94 are disulfide-bonded.

It belongs to the peroxiredoxin family. Tpx subfamily. Homodimer.

It carries out the reaction a hydroperoxide + [thioredoxin]-dithiol = an alcohol + [thioredoxin]-disulfide + H2O. Functionally, thiol-specific peroxidase that catalyzes the reduction of hydrogen peroxide and organic hydroperoxides to water and alcohols, respectively. Plays a role in cell protection against oxidative stress by detoxifying peroxides. This is Thiol peroxidase from Corynebacterium glutamicum (strain ATCC 13032 / DSM 20300 / JCM 1318 / BCRC 11384 / CCUG 27702 / LMG 3730 / NBRC 12168 / NCIMB 10025 / NRRL B-2784 / 534).